Here is a 258-residue protein sequence, read N- to C-terminus: uncharacterized protein (258 aa).

The region spanning 3–58 is the HTH deoR-type domain; it reads VAERQQKIVEIVNMRSSIRVSELSDIFSVTEETIRRDLEKLEKEHKLSRSHGGAVS. Residues 20-39 constitute a DNA-binding region (H-T-H motif); the sequence is IRVSELSDIFSVTEETIRRD.

This is an uncharacterized protein from Bacillus subtilis (strain 168).